A 454-amino-acid chain; its full sequence is Ribosomal protein uS12 methylthiotransferase RimO (454 aa).

The MTTase N-terminal domain maps to 19-129 (AKVGFVSLGC…VLAQVHEHVA (111 aa)). Residues Cys28, Cys64, Cys93, Cys161, Cys165, and Cys168 each contribute to the [4Fe-4S] cluster site. The region spanning 147–384 (LTPKHYAYLK…MAVQAKISSD (238 aa)) is the Radical SAM core domain. The region spanning 387 to 453 (QVRIGQEYLI…EHDVWGVRVE (67 aa)) is the TRAM domain.

Belongs to the methylthiotransferase family. RimO subfamily. The cofactor is [4Fe-4S] cluster.

It is found in the cytoplasm. It catalyses the reaction L-aspartate(89)-[ribosomal protein uS12]-hydrogen + (sulfur carrier)-SH + AH2 + 2 S-adenosyl-L-methionine = 3-methylsulfanyl-L-aspartate(89)-[ribosomal protein uS12]-hydrogen + (sulfur carrier)-H + 5'-deoxyadenosine + L-methionine + A + S-adenosyl-L-homocysteine + 2 H(+). Catalyzes the methylthiolation of an aspartic acid residue of ribosomal protein uS12. This is Ribosomal protein uS12 methylthiotransferase RimO from Colwellia psychrerythraea (strain 34H / ATCC BAA-681) (Vibrio psychroerythus).